The following is a 426-amino-acid chain: MLDRDLTLSDDAYESSPVSRHKTHTVKVGQVKIGGNNPIVVQSMALGAHIDSDNIKSSAQKYAKEVIELAHAGSELVRIALNSEEVAKAIPYIVEEINKEGFDGKILVGCGQYELYRLIQDYPDNIKILGKIRINPGNIGFGDKRDEKFEKIIEYAITHDLPVRIGVNWGSLDKYLSQKLMDENSLSSNPKTSDVILRKTLVMSALGSAKKAEKIGLNAEKIIISCKVSRVQDLILVYTALAKSSNYALHLGLTEAGMGNKGVVNTTAGLTYLLQNGIGDTIRASLTQRPGESRTNEVVVCQEILQSIGLCYFNPQVSSCPGCGRTSSDRFRILTEEVNGYIKTHMPVWKKKNPGVEYMKVAVMGCIVNGPGESKHANLGISLPGYGEKPVSAVYKDGKYFKTLQGDNIFEEFKEIISDYVEKHYT.

Residues 1–20 (MLDRDLTLSDDAYESSPVSR) form a disordered region. Residues cysteine 320, cysteine 323, cysteine 366, and glutamate 373 each coordinate [4Fe-4S] cluster.

It belongs to the IspG family. The cofactor is [4Fe-4S] cluster.

The enzyme catalyses (2E)-4-hydroxy-3-methylbut-2-enyl diphosphate + oxidized [flavodoxin] + H2O + 2 H(+) = 2-C-methyl-D-erythritol 2,4-cyclic diphosphate + reduced [flavodoxin]. The protein operates within isoprenoid biosynthesis; isopentenyl diphosphate biosynthesis via DXP pathway; isopentenyl diphosphate from 1-deoxy-D-xylulose 5-phosphate: step 5/6. Its function is as follows. Converts 2C-methyl-D-erythritol 2,4-cyclodiphosphate (ME-2,4cPP) into 1-hydroxy-2-methyl-2-(E)-butenyl 4-diphosphate. This is 4-hydroxy-3-methylbut-2-en-1-yl diphosphate synthase (flavodoxin) from Wolbachia pipientis subsp. Culex pipiens (strain wPip).